Consider the following 727-residue polypeptide: Probable acyl-activating enzyme 18, peroxisomal (727 aa).

A Microbody targeting signal motif is present at residues S725–I727.

Belongs to the ATP-dependent AMP-binding enzyme family. Expressed in flowers.

The protein resides in the peroxisome. Its function is as follows. May be involved in the peroxisomal activation of 2,4-dichlorophenoxybutyric acid (2,4-DB), a precursor of active auxins that inhibit root growth. In Arabidopsis thaliana (Mouse-ear cress), this protein is Probable acyl-activating enzyme 18, peroxisomal (AAE18).